Reading from the N-terminus, the 134-residue chain is Small ribosomal subunit protein bS6 (134 aa).

The disordered stretch occupies residues 103–134 (AAPVKSAEEGTEEVAAEAATEAPAETTTTVEV). Over residues 118-134 (AEAATEAPAETTTTVEV) the composition is skewed to low complexity.

This sequence belongs to the bacterial ribosomal protein bS6 family.

Functionally, binds together with bS18 to 16S ribosomal RNA. This Geobacter sp. (strain M21) protein is Small ribosomal subunit protein bS6.